A 266-amino-acid chain; its full sequence is 3-methyl-2-oxobutanoate hydroxymethyltransferase (266 aa).

The Mg(2+) site is built by D45 and D84. Residues 45–46 (DS), D84, and K112 contribute to the 3-methyl-2-oxobutanoate site. Residue E114 coordinates Mg(2+). Catalysis depends on E181, which acts as the Proton acceptor.

The protein belongs to the PanB family. Homodecamer; pentamer of dimers. The cofactor is Mg(2+).

The protein resides in the cytoplasm. The enzyme catalyses 3-methyl-2-oxobutanoate + (6R)-5,10-methylene-5,6,7,8-tetrahydrofolate + H2O = 2-dehydropantoate + (6S)-5,6,7,8-tetrahydrofolate. It participates in cofactor biosynthesis; (R)-pantothenate biosynthesis; (R)-pantoate from 3-methyl-2-oxobutanoate: step 1/2. Its function is as follows. Catalyzes the reversible reaction in which hydroxymethyl group from 5,10-methylenetetrahydrofolate is transferred onto alpha-ketoisovalerate to form ketopantoate. The sequence is that of 3-methyl-2-oxobutanoate hydroxymethyltransferase from Pseudomonas putida (strain ATCC 700007 / DSM 6899 / JCM 31910 / BCRC 17059 / LMG 24140 / F1).